Here is a 552-residue protein sequence, read N- to C-terminus: Lon protease 2 (552 aa).

97 to 104 (GPPGVGKT) contributes to the ATP binding site. The Lon proteolytic domain occupies 349–535 (EPQVGIVNGL…QEVLDEILVN (187 aa)). Residues serine 445 and lysine 488 contribute to the active site.

Belongs to the peptidase S16 family. In terms of assembly, homohexamer. Organized in a ring with a central cavity.

The protein resides in the cytoplasm. The catalysed reaction is Hydrolysis of proteins in presence of ATP.. ATP-dependent serine protease that mediates the selective degradation of mutant and abnormal proteins as well as certain short-lived regulatory proteins. Required for cellular homeostasis and for survival from DNA damage and developmental changes induced by stress. Degrades polypeptides processively to yield small peptide fragments that are 5 to 10 amino acids long. Binds to DNA in a double-stranded, site-specific manner. The protein is Lon protease 2 (lon2) of Bacillus subtilis (strain 168).